A 164-amino-acid chain; its full sequence is Putative pre-16S rRNA nuclease (164 aa).

Belongs to the YqgF nuclease family.

It localises to the cytoplasm. Functionally, could be a nuclease involved in processing of the 5'-end of pre-16S rRNA. This chain is Putative pre-16S rRNA nuclease, found in Caulobacter sp. (strain K31).